The chain runs to 453 residues: Growth/differentiation factor 9 (453 aa).

The first 25 residues, 1 to 25 (MALPNKFFLWFCCFAWLCFPISLDS), serve as a signal peptide directing secretion. The propeptide occupies 26-318 (QPSRGEAQIV…EGVRLSRHRR (293 aa)). 5 N-linked (GlcNAc...) asparagine glycosylation sites follow: asparagine 106, asparagine 163, asparagine 236, asparagine 255, and asparagine 269. The interval 281 to 300 (SLHPKRKPSQDPDQKRGLSA) is disordered. The N-linked (GlcNAc...) asparagine glycan is linked to asparagine 337. 3 disulfide bridges follow: cysteine 352–cysteine 418, cysteine 381–cysteine 450, and cysteine 385–cysteine 452.

The protein belongs to the TGF-beta family. As to quaternary structure, homodimer or heterodimer (Potential). But, in contrast to other members of this family, cannot be disulfide-linked. Post-translationally, phosphorylated; phosphorylation is critical for GDF9 function.

Its subcellular location is the secreted. Its function is as follows. Required for ovarian folliculogenesis. The sequence is that of Growth/differentiation factor 9 (GDF9) from Bos taurus (Bovine).